The primary structure comprises 529 residues: Pheophorbide a oxygenase, chloroplastic (529 aa).

Disordered regions lie at residues M1–P24 and L46–A72. Residues M1 to R47 constitute a chloroplast transit peptide. The 113-residue stretch at W82–V194 folds into the Rieske domain. The [2Fe-2S] cluster site is built by C124, H126, C144, and H147.

[2Fe-2S] cluster is required as a cofactor. As to expression, expressed in leaves. Expressed at low levels in roots, stems, panicles and seeds.

It localises to the plastid. Its subcellular location is the chloroplast. The catalysed reaction is pheophorbide a + 2 reduced [2Fe-2S]-[ferredoxin] + O2 + 2 H(+) = red chlorophyll catabolite + 2 oxidized [2Fe-2S]-[ferredoxin]. The protein operates within porphyrin-containing compound metabolism; chlorophyll degradation. Its function is as follows. Catalyzes the key reaction of chlorophyll catabolism, porphyrin macrocycle cleavage of pheophorbide a (pheide a) to a primary fluorescent catabolite (pFCC). Works in a two-step reaction with red chlorophyll catabolite reductase (RCCR). Creates the intermediate RCC through the opening of the porphyrin macrocycle by the introduction of one atom of molecular oxygen at the alpha-methine bridge. Seems to be specific for pheide a. Belongs to the chlorophyll catabolic enzymes (CCEs). May play a role in senescence and response to wounding. The polypeptide is Pheophorbide a oxygenase, chloroplastic (Oryza sativa subsp. japonica (Rice)).